Consider the following 143-residue polypeptide: Transcriptional regulator MraZ (143 aa).

SpoVT-AbrB domains follow at residues 5 to 47 and 76 to 119; these read TYTP…SARE and ASDE…DSES.

It belongs to the MraZ family. As to quaternary structure, forms oligomers.

Its subcellular location is the cytoplasm. It localises to the nucleoid. The sequence is that of Transcriptional regulator MraZ from Micrococcus luteus (strain ATCC 4698 / DSM 20030 / JCM 1464 / CCM 169 / CCUG 5858 / IAM 1056 / NBRC 3333 / NCIMB 9278 / NCTC 2665 / VKM Ac-2230) (Micrococcus lysodeikticus).